Reading from the N-terminus, the 156-residue chain is 6,7-dimethyl-8-ribityllumazine synthase (156 aa).

5-amino-6-(D-ribitylamino)uracil contacts are provided by residues phenylalanine 22, 56-58 (AFE), and 80-82 (VVI). 85–86 (ST) is a binding site for (2S)-2-hydroxy-3-oxobutyl phosphate. The active-site Proton donor is the histidine 88. Phenylalanine 113 serves as a coordination point for 5-amino-6-(D-ribitylamino)uracil. Arginine 127 is a (2S)-2-hydroxy-3-oxobutyl phosphate binding site.

It belongs to the DMRL synthase family.

The enzyme catalyses (2S)-2-hydroxy-3-oxobutyl phosphate + 5-amino-6-(D-ribitylamino)uracil = 6,7-dimethyl-8-(1-D-ribityl)lumazine + phosphate + 2 H2O + H(+). The protein operates within cofactor biosynthesis; riboflavin biosynthesis; riboflavin from 2-hydroxy-3-oxobutyl phosphate and 5-amino-6-(D-ribitylamino)uracil: step 1/2. Functionally, catalyzes the formation of 6,7-dimethyl-8-ribityllumazine by condensation of 5-amino-6-(D-ribitylamino)uracil with 3,4-dihydroxy-2-butanone 4-phosphate. This is the penultimate step in the biosynthesis of riboflavin. In Streptococcus agalactiae serotype Ia (strain ATCC 27591 / A909 / CDC SS700), this protein is 6,7-dimethyl-8-ribityllumazine synthase.